The sequence spans 426 residues: MKKMKILSFFILSLAIIIGIVYSRQCDDKCKQDYPYSSCNGNLNLYRGLGYDGNGNVIFSGKYNSSQGSGGFGLPSIFSVPSSGGCQLSKRFDIQGEILDGPGYTALDYFYKYLPQLDRYYVRFNQRGSPIFSIYNQTSNEIKAVFNIFNTPFVPAFSQNESAPFFVYGGYGIYGLAKYPTDRSDAQQAKLIYQSQIVNGLEIDGDQLYMTTYQGQFLKGSLNCLNCTKDQLQLLVTDSELASATSVSGFALTSDYMYFSYSGGIKGYPKNGDASRVRKLVSENVVAMISNGDFLYYQTDSGVVKSVSTSGNHPQVNILYTPVSDNQCQCSVGFSGDDCRQCDNGMVLWASDNGIPMCSPLNSLGKPKTCYAAYQCGSSPFIICNGTCTCLPGFSGNDCTLCGNGGEVIWENGYPTCVIQIKKIIT.

The N-terminal stretch at 1–23 (MKKMKILSFFILSLAIIIGIVYS) is a signal peptide. N-linked (GlcNAc...) asparagine glycans are attached at residues asparagine 64, asparagine 136, asparagine 160, and asparagine 226. 2 Laminin EGF-like domains span residues 325-348 (DNQC…GMVL) and 384-408 (CNGT…GGEV). 3 cysteine pairs are disulfide-bonded: cysteine 330-cysteine 339, cysteine 342-cysteine 358, and cysteine 370-cysteine 388. A glycan (N-linked (GlcNAc...) asparagine) is linked at asparagine 385.

The chain is SrfA-induced gene K protein (sigK) from Dictyostelium discoideum (Social amoeba).